The sequence spans 285 residues: Formate channel FocA (285 aa).

The Cytoplasmic portion of the chain corresponds to Met-1–His-30. The chain crosses the membrane as a helical span at residues Pro-31 to Thr-56. Topologically, residues Thr-57–Phe-64 are periplasmic. A helical transmembrane segment spans residues Gly-65 to Cys-85. Over Gly-86 to Lys-112 the chain is Cytoplasmic. Residues Asn-113–Ser-135 form a helical membrane-spanning segment. The Periplasmic portion of the chain corresponds to Gly-136 to Thr-160. The chain crosses the membrane as a helical span at residues Phe-161–Met-181. The Cytoplasmic portion of the chain corresponds to Ser-182–Ser-187. Residues Leu-188–Ser-205 form a helical membrane-spanning segment. Residues Gly-206 to Asn-249 lie on the Periplasmic side of the membrane. A helical transmembrane segment spans residues Phe-250–Val-276. Topologically, residues Ile-277–His-285 are cytoplasmic.

The protein belongs to the FNT transporter (TC 1.A.16) family. Homopentamer.

The protein resides in the cell inner membrane. The enzyme catalyses formate(in) = formate(out). Involved in the bidirectional transport of formate during mixed-acid fermentation. Functions to maintain relatively constant intracellular formate levels during growth, using different mechanisms for efflux and uptake of the anion. Is impermeable to water. The sequence is that of Formate channel FocA from Escherichia coli O157:H7.